The following is a 218-amino-acid chain: Cytochrome c biogenesis ATP-binding export protein CcmA (218 aa).

The ABC transporter domain occupies 12 to 217; it reads LHAEQLSSIR…KLSLEYRGEV (206 aa). Residue 44-51 participates in ATP binding; that stretch reads GPNGAGKS.

Belongs to the ABC transporter superfamily. CcmA exporter (TC 3.A.1.107) family. The complex is composed of two ATP-binding proteins (CcmA) and two transmembrane proteins (CcmB).

The protein localises to the cell inner membrane. It carries out the reaction heme b(in) + ATP + H2O = heme b(out) + ADP + phosphate + H(+). Part of the ABC transporter complex CcmAB involved in the biogenesis of c-type cytochromes; once thought to export heme, this seems not to be the case, but its exact role is uncertain. Responsible for energy coupling to the transport system. This is Cytochrome c biogenesis ATP-binding export protein CcmA from Idiomarina loihiensis (strain ATCC BAA-735 / DSM 15497 / L2-TR).